A 132-amino-acid polypeptide reads, in one-letter code: Agouti-signaling protein (132 aa).

The signal sequence occupies residues 1 to 22; sequence MDVTRLLLATLLVFLCFFTVYS. N-linked (GlcNAc...) asparagine glycosylation occurs at Asn39. Residues 62 to 93 are disordered; that stretch reads ISRKEAEKKRSSKKEASMKKVAQPRTPLSAPC. A compositionally biased stretch (basic and acidic residues) spans 63–79; sequence SRKEAEKKRSSKKEASM. 5 disulfides stabilise this stretch: Cys93–Cys108, Cys100–Cys114, Cys107–Cys125, Cys111–Cys132, and Cys116–Cys123. The Agouti domain occupies 93-132; that stretch reads CVATRDSCKPPAPACCDPCASCQCRFFRSACSCRVLSLNC.

The protein resides in the secreted. Its function is as follows. Involved in the regulation of melanogenesis. The binding of ASP to MC1R precludes alpha-MSH initiated signaling and thus blocks production of cAMP, leading to a down-regulation of eumelanogenesis (brown/black pigment) and thus increasing synthesis of pheomelanin (yellow/red pigment). This is Agouti-signaling protein (ASIP) from Trachypithecus auratus (Javan langur).